Here is a 505-residue protein sequence, read N- to C-terminus: MVSIRPDEISSIIRQQIEQYDQQVKVENVGTVLQVGDGIARVYGLEKVMASELLEFEDGTVGIALNLEEDNVGVVLMGEGRDLEEGSTVRSTGRVAQVPVGEGAIGRVVDALVRPIDGKGEIHSTETRLLESPAPGIVQRKSVYEPMQTGITAIDAMIPIGRGQRELIIGDRQTGKTAVAIDTILNQKGSGVICVYVAIGQKASTVAQVVNVLRERGALEYTIVVAANASDPAALQYLAPYTGATLAEYFMYKGKATLVVYDDLSKQAQAYRQMSLLLRRPPGREAYPGDVFYLHSRLLERAAKLSPELGEGSMTALPVVETQAGDVSAYIPTNVISITDGQIFLSSDLFNAGLRPAINAGISVSRVGSAAQIKAMKQVAGKLKLELAQFDELQAFAQFASDLDKATQNQLARGQRLRELLKQPQYSPIPVEEQVALIYAGTNGYLDEIPTDKVTSFTAGFREYLHNSQPKYGELVRSEKKLGDEAEGLLKSALNDYKKTFLAMA.

170-177 (GDRQTGKT) serves as a coordination point for ATP.

This sequence belongs to the ATPase alpha/beta chains family. F-type ATPases have 2 components, CF(1) - the catalytic core - and CF(0) - the membrane proton channel. CF(1) has five subunits: alpha(3), beta(3), gamma(1), delta(1), epsilon(1). CF(0) has four main subunits: a, b, b' and c.

It is found in the cellular thylakoid membrane. The catalysed reaction is ATP + H2O + 4 H(+)(in) = ADP + phosphate + 5 H(+)(out). In terms of biological role, produces ATP from ADP in the presence of a proton gradient across the membrane. The alpha chain is a regulatory subunit. The sequence is that of ATP synthase subunit alpha from Cyanothece sp. (strain PCC 7425 / ATCC 29141).